We begin with the raw amino-acid sequence, 173 residues long: Cytochrome c-type biogenesis protein CcmE (173 aa).

Topologically, residues Met1 to Arg7 are cytoplasmic. Residues Leu8–Ala28 form a helical; Signal-anchor for type II membrane protein membrane-spanning segment. Topologically, residues Met29–Arg173 are periplasmic. The heme site is built by His122 and Tyr126. The disordered stretch occupies residues Ala134 to Arg173. Over residues Gly145 to Thr162 the composition is skewed to basic and acidic residues.

The protein belongs to the CcmE/CycJ family.

The protein localises to the cell inner membrane. Functionally, heme chaperone required for the biogenesis of c-type cytochromes. Transiently binds heme delivered by CcmC and transfers the heme to apo-cytochromes in a process facilitated by CcmF and CcmH. This chain is Cytochrome c-type biogenesis protein CcmE, found in Methylorubrum extorquens (strain CM4 / NCIMB 13688) (Methylobacterium extorquens).